Here is a 176-residue protein sequence, read N- to C-terminus: Dual-action ribosomal maturation protein DarP (176 aa).

It belongs to the DarP family.

It is found in the cytoplasm. Functionally, member of a network of 50S ribosomal subunit biogenesis factors which assembles along the 30S-50S interface, preventing incorrect 23S rRNA structures from forming. Promotes peptidyl transferase center (PTC) maturation. In Aliivibrio fischeri (strain MJ11) (Vibrio fischeri), this protein is Dual-action ribosomal maturation protein DarP.